Here is a 511-residue protein sequence, read N- to C-terminus: Probable endopeptidase p60 (511 aa).

The signal sequence occupies residues 1-27 (MNMKKATIVSAAGIAVTAFAAPSVVSA). The LysM 1 domain occupies 28 to 71 (NTVVVASGDTLWGIASKTGTTVDQLKQLNKLDSDRIVPGQKLTI). Positions 78–142 (KVEKSVSATW…VNGKYLSDAK (65 aa)) constitute an SH3b domain. The LysM 2 domain maps to 175–218 (STYKVKSGDTIWALSVKYGVPVQKLIEWNNLSSSSIYVGQTIAV). Low complexity-rich tracts occupy residues 229–257 (TVKQ…QAKP) and 264–282 (KPAV…AKPA). The interval 229–291 (TVKQAAPAKV…AVEQKASTPA (63 aa)) is disordered. In terms of domain architecture, LysM 3 spans 297–341 (ATYKVQNGDSLGKIASLFKVSVADLTNWNNLNATITIYAGQELSV). Low complexity-rich tracts occupy residues 347-362 (KPKP…SKPA) and 372-390 (TNTT…NTSQ). The interval 347-390 (KPKPAAPAKPAVSKPATSTPAKVTPTNTTNNSTPTTNVNNNTSQ) is disordered. The NlpC/P60 domain occupies 393 to 511 (SASFSALYAE…GQYLVGFGRV (119 aa)). Catalysis depends on cysteine 423, which acts as the Nucleophile. Histidine 473 serves as the catalytic Proton acceptor. Residue aspartate 485 is part of the active site.

Belongs to the peptidase C40 family.

This major extracellular protein may be involved in the invasion of non-professional phagocytic cells by Listeria. The sequence is that of Probable endopeptidase p60 (iap) from Listeria grayi (Listeria murrayi).